The following is a 531-amino-acid chain: HERV-H LTR-associating protein 1 (531 aa).

Positions 1 to 29 (MLGFLSRGPSMKLCMGLACVLSLWNTVSG) are cleaved as a signal peptide. 3 N-linked (GlcNAc...) asparagine glycosylation sites follow: asparagine 79, asparagine 143, and asparagine 161. 2 disordered regions span residues 231–289 (GTAR…RPPE) and 340–362 (EKKP…GTEE). Composition is skewed to polar residues over residues 232–269 (TART…SSPW) and 349–362 (ETRS…GTEE).

It is found in the secreted. The sequence is that of HERV-H LTR-associating protein 1 (HHLA1) from Homo sapiens (Human).